The following is a 168-amino-acid chain: Replicase polyprotein 1ab (168 aa).

Positions 1–165 constitute a Nidovirus-type SAM-dependent 2'-O-MTase domain; that stretch reads PNTKSIDGEN…KLLNFGNHLV (165 aa).

Its function is as follows. The replicase polyprotein of coronaviruses is a multifunctional protein: it contains the activities necessary for the transcription of negative stranded RNA, leader RNA, subgenomic mRNAs and progeny virion RNA as well as proteinases responsible for the cleavage of the polyprotein into functional products. The protein is Replicase polyprotein 1ab (rep) of Canine coronavirus (strain Insavc-1) (CCoV).